The following is a 311-amino-acid chain: L-lactate dehydrogenase 2 (311 aa).

Residues Val-14, Asp-35, and Arg-40 each coordinate NAD(+). Arg-90 is a binding site for substrate. Residues Ser-103, 120-122 (ATN), and Thr-145 contribute to the NAD(+) site. 122-125 (NPCD) contributes to the substrate binding site. 150 to 153 (DTTR) is a binding site for substrate. The active-site Proton acceptor is His-177. Thr-230 provides a ligand contact to substrate.

It belongs to the LDH/MDH superfamily. LDH family. In terms of assembly, homotetramer.

The protein resides in the cytoplasm. The enzyme catalyses (S)-lactate + NAD(+) = pyruvate + NADH + H(+). The protein operates within fermentation; pyruvate fermentation to lactate; (S)-lactate from pyruvate: step 1/1. Functionally, catalyzes the conversion of lactate to pyruvate. In Listeria innocua serovar 6a (strain ATCC BAA-680 / CLIP 11262), this protein is L-lactate dehydrogenase 2.